Consider the following 249-residue polypeptide: Triosephosphate isomerase (249 aa).

8–10 (NWK) contributes to the substrate binding site. Residue His-95 is the Electrophile of the active site. Glu-166 (proton acceptor) is an active-site residue. Substrate is bound by residues Gly-172, Ser-211, and 232–233 (GG).

Belongs to the triosephosphate isomerase family. In terms of assembly, homodimer.

The protein localises to the cytoplasm. It carries out the reaction D-glyceraldehyde 3-phosphate = dihydroxyacetone phosphate. The protein operates within carbohydrate biosynthesis; gluconeogenesis. It functions in the pathway carbohydrate degradation; glycolysis; D-glyceraldehyde 3-phosphate from glycerone phosphate: step 1/1. Involved in the gluconeogenesis. Catalyzes stereospecifically the conversion of dihydroxyacetone phosphate (DHAP) to D-glyceraldehyde-3-phosphate (G3P). The chain is Triosephosphate isomerase from Granulibacter bethesdensis (strain ATCC BAA-1260 / CGDNIH1).